The sequence spans 299 residues: Biotin transporter (299 aa).

The next 10 helical transmembrane spans lie at 2-22, 26-46, 56-76, 81-101, 110-130, 137-157, 172-192, 202-222, 233-253, and 256-276; these read ALLIITTILWAFSFSLFGEYL, VDSYFAVLIRVGLAALVFLPF, TISLYMLVGAMQLGIMYMLSF, YLTVSELLLFTVLTPLYITLI, LRWGYAFSALLAVIGAGIIRY, FWVGLLLVQLSNISFAIGMVG, AFAWFYLGAFLVAAVAWSLLG, LQWSILVFLGVVASGIGYFMW, TLGIMNNMHVPAGLLVNLAIW, and QPHWPSFITGAAVILASLWVH. EamA domains follow at residues 3-128 and 139-274; these read LLII…AGII and VGLL…ASLW.

This sequence belongs to the drug/metabolite transporter (DMT) superfamily. 10 TMS drug/metabolite exporter (DME) (TC 2.A.7.3) family.

The protein resides in the cell inner membrane. It catalyses the reaction biotin(in) = biotin(out). Functionally, uptake of biotin. The chain is Biotin transporter from Salmonella typhi.